The primary structure comprises 122 residues: Large ribosomal subunit protein uL14 (122 aa).

It belongs to the universal ribosomal protein uL14 family. As to quaternary structure, part of the 50S ribosomal subunit. Forms a cluster with proteins L3 and L19. In the 70S ribosome, L14 and L19 interact and together make contacts with the 16S rRNA in bridges B5 and B8.

Functionally, binds to 23S rRNA. Forms part of two intersubunit bridges in the 70S ribosome. The chain is Large ribosomal subunit protein uL14 from Phytoplasma mali (strain AT).